The primary structure comprises 347 residues: DNA-directed RNA polymerase subunit alpha (347 aa).

The interval 1–243 (MLIKQGDRLI…DQISVFINFD (243 aa)) is alpha N-terminal domain (alpha-NTD). Residues 260-347 (VNENLFKGID…EWKRKQQNEA (88 aa)) are alpha C-terminal domain (alpha-CTD).

Belongs to the RNA polymerase alpha chain family. As to quaternary structure, homodimer. The RNAP catalytic core consists of 2 alpha, 1 beta, 1 beta' and 1 omega subunit. When a sigma factor is associated with the core the holoenzyme is formed, which can initiate transcription.

It catalyses the reaction RNA(n) + a ribonucleoside 5'-triphosphate = RNA(n+1) + diphosphate. In terms of biological role, DNA-dependent RNA polymerase catalyzes the transcription of DNA into RNA using the four ribonucleoside triphosphates as substrates. The sequence is that of DNA-directed RNA polymerase subunit alpha from Nitratidesulfovibrio vulgaris (strain DSM 19637 / Miyazaki F) (Desulfovibrio vulgaris).